Reading from the N-terminus, the 399-residue chain is Elongation factor Tu (399 aa).

The 200-residue stretch at 10–209 (KPHVNIGTIG…AVDDYIPTPV (200 aa)) folds into the tr-type G domain. The G1 stretch occupies residues 19–26 (GHVDHGKT). 19 to 26 (GHVDHGKT) provides a ligand contact to GTP. T26 contributes to the Mg(2+) binding site. Residues 62 to 66 (GITIN) are G2. The segment at 83–86 (DCPG) is G3. GTP contacts are provided by residues 83-87 (DCPGH) and 138-141 (NKCD). The interval 138–141 (NKCD) is G4. The interval 175 to 177 (SAY) is G5.

It belongs to the TRAFAC class translation factor GTPase superfamily. Classic translation factor GTPase family. EF-Tu/EF-1A subfamily. In terms of assembly, monomer.

The protein localises to the cytoplasm. The enzyme catalyses GTP + H2O = GDP + phosphate + H(+). Its function is as follows. GTP hydrolase that promotes the GTP-dependent binding of aminoacyl-tRNA to the A-site of ribosomes during protein biosynthesis. The protein is Elongation factor Tu of Bifidobacterium longum (strain DJO10A).